The following is a 208-amino-acid chain: Protein-L-isoaspartate O-methyltransferase (208 aa).

S59 is a catalytic residue.

This sequence belongs to the methyltransferase superfamily. L-isoaspartyl/D-aspartyl protein methyltransferase family.

The protein localises to the cytoplasm. It carries out the reaction [protein]-L-isoaspartate + S-adenosyl-L-methionine = [protein]-L-isoaspartate alpha-methyl ester + S-adenosyl-L-homocysteine. Functionally, catalyzes the methyl esterification of L-isoaspartyl residues in peptides and proteins that result from spontaneous decomposition of normal L-aspartyl and L-asparaginyl residues. It plays a role in the repair and/or degradation of damaged proteins. The protein is Protein-L-isoaspartate O-methyltransferase of Erwinia tasmaniensis (strain DSM 17950 / CFBP 7177 / CIP 109463 / NCPPB 4357 / Et1/99).